The following is a 428-amino-acid chain: Keratin, type I cytoskeletal 18-A (428 aa).

The tract at residues 2–78 (SSSRSVYSSS…NVNLFGGVQN (77 aa)) is head. The disordered stretch occupies residues 24–45 (SAPRFTPGSSAASVHAGAGGSG). The tract at residues 79–114 (EKETMQDLNDRLASYLERVRSLESANKKLEVQIRQH) is coil 1A. The 311-residue stretch at 79–389 (EKETMQDLND…RLLEGDSFDL (311 aa)) folds into the IF rod domain. Residues 115-130 (TEKKGPAKDWSPYYMT) form a linker 1 region. Residues 131–222 (IEDLKKQVFN…KNHQDDVNEL (92 aa)) form a coil 1B region. A linker 12 region spans residues 223-246 (QAQIASSAVTVEVDAPKSQDLGKI). The tract at residues 247–384 (MADLRAQYDE…IQTYRRLLEG (138 aa)) is coil 2. A tail region spans residues 385 to 428 (DSFDLQDAVPVVTTQTVKKVITTTQRLVDGKVVAESNNTEVIKS).

This sequence belongs to the intermediate filament family. In terms of assembly, heterotetramer of two type I and two type II keratins. Keratin-18 associates with keratin-8. In terms of processing, proteolytically cleaved by caspases during epithelial cell apoptosis. Expressed at high levels in notochord and low levels in adult liver.

In terms of biological role, when phosphorylated, plays a role in filament reorganization. The chain is Keratin, type I cytoskeletal 18-A (krt18-a) from Xenopus laevis (African clawed frog).